The primary structure comprises 301 residues: Putative S-adenosyl-L-methionine-dependent methyltransferase MAP_3777 (301 aa).

S-adenosyl-L-methionine contacts are provided by residues Asp126 and 155–156; that span reads DL.

It belongs to the UPF0677 family.

Its function is as follows. Exhibits S-adenosyl-L-methionine-dependent methyltransferase activity. This Mycolicibacterium paratuberculosis (strain ATCC BAA-968 / K-10) (Mycobacterium paratuberculosis) protein is Putative S-adenosyl-L-methionine-dependent methyltransferase MAP_3777.